We begin with the raw amino-acid sequence, 405 residues long: Probable tRNA sulfurtransferase (405 aa).

Positions 75–183 constitute a THUMP domain; that stretch reads PRAAGAAADV…QNLAYVYLET (109 aa). ATP is bound by residues 201–202, K285, G307, and Q316; that span reads LM.

This sequence belongs to the ThiI family.

Its subcellular location is the cytoplasm. The catalysed reaction is [ThiI sulfur-carrier protein]-S-sulfanyl-L-cysteine + a uridine in tRNA + 2 reduced [2Fe-2S]-[ferredoxin] + ATP + H(+) = [ThiI sulfur-carrier protein]-L-cysteine + a 4-thiouridine in tRNA + 2 oxidized [2Fe-2S]-[ferredoxin] + AMP + diphosphate. It catalyses the reaction [ThiS sulfur-carrier protein]-C-terminal Gly-Gly-AMP + S-sulfanyl-L-cysteinyl-[cysteine desulfurase] + AH2 = [ThiS sulfur-carrier protein]-C-terminal-Gly-aminoethanethioate + L-cysteinyl-[cysteine desulfurase] + A + AMP + 2 H(+). The protein operates within cofactor biosynthesis; thiamine diphosphate biosynthesis. Functionally, catalyzes the ATP-dependent transfer of a sulfur to tRNA to produce 4-thiouridine in position 8 of tRNAs, which functions as a near-UV photosensor. Also catalyzes the transfer of sulfur to the sulfur carrier protein ThiS, forming ThiS-thiocarboxylate. This is a step in the synthesis of thiazole, in the thiamine biosynthesis pathway. The sulfur is donated as persulfide by IscS. This chain is Probable tRNA sulfurtransferase, found in Methanosarcina mazei (strain ATCC BAA-159 / DSM 3647 / Goe1 / Go1 / JCM 11833 / OCM 88) (Methanosarcina frisia).